The chain runs to 63 residues: Beta-defensin 38 (63 aa).

The N-terminal stretch at 1 to 21 is a signal peptide; the sequence is MKISCFLLLVLSLYLFQVNQA. 3 disulfides stabilise this stretch: Cys-29–Cys-58, Cys-36–Cys-51, and Cys-41–Cys-59.

This sequence belongs to the beta-defensin family.

Its subcellular location is the secreted. Its function is as follows. Has antibacterial activity. The chain is Beta-defensin 38 (Defb38) from Rattus norvegicus (Rat).